Here is a 422-residue protein sequence, read N- to C-terminus: Retinoic acid receptor RXR-beta-B (422 aa).

Residues 1–89 form a modulating region; sequence MNSLPPSTSA…SGPMLSQKRM (89 aa). 2 consecutive NR C4-type zinc fingers follow at residues 90-110 and 126-150; these read CAIC…CEGC and CRDN…YQKC. The nuclear receptor DNA-binding region spans 90 to 155; it reads CAICGDRSSG…RYQKCLAMGM (66 aa). The hinge stretch occupies residues 156-178; that stretch reads KREAVQEERQKNKERDGDYECSS. The segment covering 161 to 173 has biased composition (basic and acidic residues); it reads QEERQKNKERDGD. A disordered region spans residues 161–182; the sequence is QEERQKNKERDGDYECSSSANE. An NR LBD domain is found at 181–421; the sequence is NEEMPVEKIL…TFLMEMLESP (241 aa).

It belongs to the nuclear hormone receptor family. NR2 subfamily. In terms of assembly, homodimer. Heterodimer; with a rar molecule. Binds DNA preferentially as a rar/rxr heterodimer. Heterodimerizes with rarga. In terms of tissue distribution, shows uniform expression from the blastula to mid-gastrula stages. At 12 hours post-fertilization (hpf), expressed ubiquitously but more weakly. At 24 hpf, restricted to the ventral diencephalon, pharangeal endoderm and trunk and tail mesoderm; mesoderm expression is in medial cells of each somite along the dorsoventral axis, forming stripes. At 48 hpf, expressed in forebrain, eye, midbrain and anterior hindbrain.

It is found in the nucleus. Receptor for retinoic acid. Retinoic acid receptors bind as heterodimers to their target response elements in response to their ligands, all-trans or 9-cis retinoic acid, and regulate gene expression in various biological processes. The rar/rxr heterodimers bind to the retinoic acid response elements (RARE) composed of tandem 5'-AGGTCA-3' sites known as DR1-DR5. The high affinity ligand for rxrs is 9-cis retinoic acid. The polypeptide is Retinoic acid receptor RXR-beta-B (rxrbb) (Danio rerio (Zebrafish)).